Here is a 229-residue protein sequence, read N- to C-terminus: Glutathione S-transferase 3 (229 aa).

A Blocked amino end (Ala) modification is found at alanine 2. The GST N-terminal domain occupies 3–83; the sequence is AKPVLYYFNG…YIAGKYNLYG (81 aa). Glutathione-binding positions include tyrosine 9, 54-55, and 67-68; these read QV and QT. Residues 85–207 form the GST C-terminal domain; that stretch reads DLKERALIDM…LAPGSKRKPI (123 aa).

Belongs to the GST superfamily. Alpha family. In terms of assembly, homodimer or heterodimer (with a subunit from group CL-4).

The protein resides in the cytoplasm. It carries out the reaction RX + glutathione = an S-substituted glutathione + a halide anion + H(+). Its function is as follows. Catalyzes the conjugation of GSH to a wide variety of electrophilic alkylating agents. Also involved in the metabolism of lipid hydroperoxides, prostaglandins and leukotriene A4 and in binding of non-substrate hydrophobic ligands such as bile acids, a number of drugs and thyroid hormones. This GST does not exhibit peroxidase activity. This chain is Glutathione S-transferase 3, found in Gallus gallus (Chicken).